Reading from the N-terminus, the 421-residue chain is Hydrolyase poxO (421 aa).

S239 functions as the Nucleophile in the catalytic mechanism.

It belongs to the AB hydrolase superfamily. FUS2 hydrolase family. As to quaternary structure, homodimer.

It participates in secondary metabolite biosynthesis. Hydrolyase; part of the gene cluster that mediates the biosynthesis of oxaleimides, cytotoxic compounds containing an unusual disubstituted succinimide moiety. The first step of the pathway is provided by the HR-PKS poxF that serves in a new mode of collaborative biosynthesis with the PKS-NRPS poxE, by providing the olefin containing amino acid substrate via the synthesis of an ACP-bound dec-4-enoate. The cytochrome P450 monooxygenase poxM-catalyzed oxidation at the alpha-position creates the enzyme-bound 2-hydroxydec-4-enoyl-ACP thioester, which may be prone to spontaneous hydrolysis to yield 2-hydroxydec-4-enoic acid due to increased electrophilicity of the carbonyl. 2-hydroxydec-4-enoic acid can then be further oxidized by poxM to yield the alpha-ketoacid 2-oxodec-4-enoicacid, which is reductively aminated by the aminotransferase poxL to yield (S,E)-2-aminodec-4-enoic acid. The Hybrid PKS-NRPS synthetase poxE then performs condensation between the octaketide product of its PKS modules and the amino group of (S,E)-2-aminodec-4-enoic acid which is activated and incorporated by the adenylation domain. The resulting aminoacyl product can be cyclized by the Diels-Alderase PoxQ and reductively released by the reductive (R) domain of poxE to yield an aldehyde intermediate. The released aldehyde is then substrate for a Knoevenagel condensation by the hydrolyase poxO followed by an oxidation at the 5-position of the pyrrolidone ring. The presence of the olefin from the amino acid building block allows for migration of the substituted allyl group to occur. This allylic transposition reaction takes place in a conjugate addition, semipinacol-like fashion to yield a succinimide intermediate. Iterative two-electron oxidations of the C7 methyl of the succinimide intermediate to the carboxylic acid can be catalyzed by one of two remaining cytochrome P450 monooxygenasess poxC or poxD to yield oxaleimide A. Subsequent oxidation yields the maleimide scaffold oxaleimide I. Both oxaleimide A and oxaleimide I can undergo oxidative modifications in the decalin ring to yield the series of products oxaleimides B to H. In Penicillium oxalicum, this protein is Hydrolyase poxO.